The primary structure comprises 135 residues: MNSCASINDEVITKYNELILGHISKGIIIKFSDDFKEVVFEDSFNGESFEDYINKFPQDDCRYGVYDFSYMDNKENKKNKIFFISWCPVETKIKNKIVHTATEQSIYKKLVGIDAIIKATDNTEISQSLVEERCK.

In terms of domain architecture, ADF-H spans 3 to 135; the sequence is SCASINDEVI…SQSLVEERCK (133 aa).

It belongs to the actin-binding proteins ADF family.

Its subcellular location is the cytoplasm. It is found in the cytoskeleton. Functionally, controls actin polymerization and depolymerization. The polypeptide is Cofilin-4 (cofE) (Dictyostelium discoideum (Social amoeba)).